Reading from the N-terminus, the 34-residue chain is DDIT3 upstream open reading frame protein (34 aa).

Interacts with DDIT3 (isoform 1).

Its subcellular location is the nucleus. The protein resides in the cytoplasm. Functionally, product of the upstream open reading frame (uORF) of DDIT3/CHOP that is specifically produced in absence of stress, thereby preventing translation of downstream stress effector DDIT3/CHOP. The sequence is that of DDIT3 upstream open reading frame protein from Mus musculus (Mouse).